The sequence spans 213 residues: MGNALRKGKFEGWAAVRERMRRTRTFPESEPCAPGVGQISRELAARGGIPSSHTPQNNAALAFLESHQEEEVGFPVAPQVPLRPMTYKGAFDLSFFLKEKGGLEGLIYSHKRAEILDLWVYNTQGFFPDWQNYTPGPGTRFPLTFGWLFKLVPVSEEEAERLGNTCERANLLHPACAHGFEDTHKEILMWKFDRSLGNTHVAMITHPELFQKD.

The N-myristoyl glycine; by host moiety is linked to residue Gly2. The tract at residues 68–71 is acidic; interacts with host PACS1 and PACS2; stabilizes the interaction of NEF/MHC-I with host AP1M1; necessary for MHC-I internalization; it reads QEEE. The interval 75–84 is SH3-binding; interaction with Src family tyrosine kinases; the sequence is PVAPQVPLRP. The short motif at 78–81 is the PxxP; stabilizes the interaction of NEF/MHC-I with host AP1M1; necessary for MHC-I internalization element; the sequence is PQVP. Positions 114–130 are mediates dimerization, Nef-PTE1 interaction; the sequence is EILDLWVYNTQGFFPDW. The interval 154–187 is binding to ATP6V1H; sequence VSEEEAERLGNTCERANLLHPACAHGFEDTHKEI. The short motif at 171 to 172 is the Dileucine internalization motif; necessary for CD4 internalization element; that stretch reads LL. A Diacidic; necessary for CD4 internalization motif is present at residues 181–182; the sequence is ED.

It belongs to the lentivirus primate group Nef protein family. Monomer; cytosolic form. Homodimer; membrane bound form. Interacts with Nef associated p21-activated kinase (PAK2); this interaction activates PAK2. Associates with the Nef-MHC-I-AP1 complex; this complex is required for MHC-I internalization. Interacts (via C-terminus) with host PI3-kinase. Interacts with host PACS1; this interaction seems to be weak. Interacts with host PACS2. Interacts with host LCK and MAPK3; these interactions inhibit the kinase activity of the latter. Interacts with host ATP6V1H; this interaction may play a role in CD4 endocytosis. Associates with the CD4-Nef-AP2 complex; this complex is required for CD4 internalization. Interacts with host AP2 subunit alpha and AP2 subunit sigma2. Interacts with TCR-zeta chain; this interaction up-regulates the Fas ligand (FasL) surface expression. Interacts with host HCK, LYN, and SRC; these interactions activate the Src family kinases. Interacts with MAP3K5; this interaction inhibits the Fas and TNFR-mediated death signals. Interacts with beta-COP and PTE1. Interacts with human RACK1; this increases Nef phosphorylation by PKC. Interacts with TP53; this interaction decreases the half-life of TP53, protecting the infected cell against p53-mediated apoptosis. Post-translationally, the virion-associated Nef proteins are cleaved by the viral protease to release the soluble C-terminal core protein. Nef is probably cleaved concomitantly with viral structural proteins on maturation of virus particles. In terms of processing, myristoylated. Phosphorylated on serine residues, probably by host PKCdelta and theta.

Its subcellular location is the host cell membrane. The protein resides in the virion. It localises to the secreted. It is found in the host Golgi apparatus membrane. Factor of infectivity and pathogenicity, required for optimal virus replication. Alters numerous pathways of T-lymphocyte function and down-regulates immunity surface molecules in order to evade host defense and increase viral infectivity. Alters the functionality of other immunity cells, like dendritic cells, monocytes/macrophages and NK cells. Functionally, in infected CD4(+) T-lymphocytes, down-regulates the surface MHC-I, mature MHC-II, CD4, CD28, CCR5 and CXCR4 molecules. Mediates internalization and degradation of host CD4 through the interaction of with the cytoplasmic tail of CD4, the recruitment of AP-2 (clathrin adapter protein complex 2), internalization through clathrin coated pits, and subsequent transport to endosomes and lysosomes for degradation. Diverts host MHC-I molecules to the trans-Golgi network-associated endosomal compartments by an endocytic pathway to finally target them for degradation. MHC-I down-regulation may involve AP-1 (clathrin adapter protein complex 1) or possibly Src family kinase-ZAP70/Syk-PI3K cascade recruited by PACS2. In consequence infected cells are masked for immune recognition by cytotoxic T-lymphocytes. Decreasing the number of immune receptors also prevents reinfection by more HIV particles (superinfection). Down-regulates host SERINC3 and SERINC5 thereby excluding these proteins from the viral particles. Virion infectivity is drastically higher when SERINC3 or SERINC5 are excluded from the viral envelope, because these host antiviral proteins impair the membrane fusion event necessary for subsequent virion penetration. Its function is as follows. Bypasses host T-cell signaling by inducing a transcriptional program nearly identical to that of anti-CD3 cell activation. Interaction with TCR-zeta chain up-regulates the Fas ligand (FasL). Increasing surface FasL molecules and decreasing surface MHC-I molecules on infected CD4(+) cells send attacking cytotoxic CD8+ T-lymphocytes into apoptosis. In terms of biological role, plays a role in optimizing the host cell environment for viral replication without causing cell death by apoptosis. Protects the infected cells from apoptosis in order to keep them alive until the next virus generation is ready to strike. Inhibits the Fas and TNFR-mediated death signals by blocking MAP3K5/ASK1. Decreases the half-life of TP53, protecting the infected cell against p53-mediated apoptosis. Inhibits the apoptotic signals regulated by the Bcl-2 family proteins through the formation of a Nef/PI3-kinase/PAK2 complex that leads to activation of PAK2 and induces phosphorylation of host BAD. Extracellular Nef protein targets CD4(+) T-lymphocytes for apoptosis by interacting with CXCR4 surface receptors. The chain is Protein Nef from Human immunodeficiency virus type 1 group O (isolate ANT70) (HIV-1).